The sequence spans 184 residues: UPF0398 protein BC_1561 (184 aa).

Belongs to the UPF0398 family.

The polypeptide is UPF0398 protein BC_1561 (Bacillus cereus (strain ATCC 14579 / DSM 31 / CCUG 7414 / JCM 2152 / NBRC 15305 / NCIMB 9373 / NCTC 2599 / NRRL B-3711)).